The chain runs to 98 residues: UPF0473 protein LAR_0522 (98 aa).

Belongs to the UPF0473 family.

The polypeptide is UPF0473 protein LAR_0522 (Limosilactobacillus reuteri subsp. reuteri (strain JCM 1112) (Lactobacillus reuteri)).